The sequence spans 231 residues: 5'-methylthioadenosine/S-adenosylhomocysteine nucleosidase (231 aa).

The active-site Proton acceptor is Glu-12. Substrate contacts are provided by residues Gly-78, Met-153, and 174-175; that span reads ME. Asp-198 functions as the Proton donor in the catalytic mechanism.

It belongs to the PNP/UDP phosphorylase family. MtnN subfamily.

It carries out the reaction S-adenosyl-L-homocysteine + H2O = S-(5-deoxy-D-ribos-5-yl)-L-homocysteine + adenine. The enzyme catalyses S-methyl-5'-thioadenosine + H2O = 5-(methylsulfanyl)-D-ribose + adenine. It catalyses the reaction 5'-deoxyadenosine + H2O = 5-deoxy-D-ribose + adenine. The protein operates within amino-acid biosynthesis; L-methionine biosynthesis via salvage pathway; S-methyl-5-thio-alpha-D-ribose 1-phosphate from S-methyl-5'-thioadenosine (hydrolase route): step 1/2. In terms of biological role, catalyzes the irreversible cleavage of the glycosidic bond in both 5'-methylthioadenosine (MTA) and S-adenosylhomocysteine (SAH/AdoHcy) to adenine and the corresponding thioribose, 5'-methylthioribose and S-ribosylhomocysteine, respectively. Also cleaves 5'-deoxyadenosine, a toxic by-product of radical S-adenosylmethionine (SAM) enzymes, into 5-deoxyribose and adenine. The chain is 5'-methylthioadenosine/S-adenosylhomocysteine nucleosidase from Bacillus velezensis (strain DSM 23117 / BGSC 10A6 / LMG 26770 / FZB42) (Bacillus amyloliquefaciens subsp. plantarum).